The following is a 435-amino-acid chain: Glutamyl-tRNA reductase (435 aa).

Residues 49-52 (TCNR), Ser-109, 114-116 (ETQ), and Gln-120 each bind substrate. Cys-50 (nucleophile) is an active-site residue. 189-194 (GAGEMS) contributes to the NADP(+) binding site.

Belongs to the glutamyl-tRNA reductase family. Homodimer.

It carries out the reaction (S)-4-amino-5-oxopentanoate + tRNA(Glu) + NADP(+) = L-glutamyl-tRNA(Glu) + NADPH + H(+). Its pathway is porphyrin-containing compound metabolism; protoporphyrin-IX biosynthesis; 5-aminolevulinate from L-glutamyl-tRNA(Glu): step 1/2. Catalyzes the NADPH-dependent reduction of glutamyl-tRNA(Glu) to glutamate 1-semialdehyde (GSA). The sequence is that of Glutamyl-tRNA reductase from Listeria monocytogenes serotype 4b (strain F2365).